The sequence spans 203 residues: Potassium channel Cha6605_3372 (203 aa).

Residues 1 to 7 (MVEAPEQ) are Cytoplasmic-facing. Residues 8–31 (SETGRIEAFSDGVFAIAITLLVLE) form a helical membrane-spanning segment. A RxxxFSD motif motif is present at residues 12–18 (RIEAFSD). The Extracellular segment spans residues 32–52 (IKVPQHKIVETVGLVSSLLSL). The short helix H1 stretch occupies residues 37-42 (HKIVET). The segment at 44–50 (GLVSSLL) is short helix H2. Residues 53 to 78 (WPSYLAFLTSFASILVMWVNHHRIFS) traverse the membrane as a helical segment. Residues 79–84 (LVARTD) are Cytoplasmic-facing. The chain crosses the membrane as a helical span at residues 85-110 (HAFFYWNGLLLMLVTFVPFPTALLAE). Over 111-117 (YLIHPQA) the chain is Extracellular. The helical transmembrane segment at 118–142 (RVAASVYAGIFLAIAIVFNRLWKHA) threads the bilayer. Residues 143–154 (ATADRLLAQKAD) are Cytoplasmic-facing. The helical transmembrane segment at 155-181 (RHEVDAITKQYRFGPGLYLVAFALSFI) threads the bilayer. Topologically, residues 182-183 (SV) are extracellular. Residues 184–199 (WLSVGVCFVLAIYFAL) traverse the membrane as a helical segment. Over 200–203 (RSNA) the chain is Cytoplasmic.

The protein belongs to the TMEM175 family. In terms of assembly, homotetramer.

The protein resides in the membrane. The catalysed reaction is K(+)(in) = K(+)(out). Potassium channel. The channel is permeable for K(+), Rb(+) and Cs(+), while it is unable to conduct Na(+). This is Potassium channel Cha6605_3372 from Chamaesiphon minutus (strain ATCC 27169 / PCC 6605).